Reading from the N-terminus, the 218-residue chain is MAPIRRSSRLAERYDAIESKKRSLKRLEEQIKAEEEQFSDKMKQLEDEIKIKEQVITMFKRKTVRREWMRNSRQATTNINIAQIESLKLQLEEGEKDIAEAEKQAEPTTPQQEAELSETFKQMVRDRMKVKDVDEKLLQQYMKKENVEFEWRSCFICTMEYSRTDKNLHPIILNCGHNLCRSCINKLTGNGIVKCPFDRLDTRVRVTGLPRNLALINL.

The RING-type zinc finger occupies 154-199 (CFICTMEYSRTDKNLHPIILNCGHNLCRSCINKLTGNGIVKCPFDR).

This is an uncharacterized protein from Caenorhabditis elegans.